We begin with the raw amino-acid sequence, 395 residues long: GPI-anchor transamidase (395 aa).

An N-terminal signal peptide occupies residues 1 to 27 (MAAPCFLTLRVATLAALALLSLGSSAA). Topologically, residues 28-368 (GHIEDQAEQF…PKPRDWHPPG (341 aa)) are lumenal. Ca(2+) is bound by residues aspartate 79, isoleucine 82, glutamate 118, and aspartate 120. The active-site Proton donor is the histidine 164. Cysteine 206 serves as the catalytic Nucleophile; acyl-thioester intermediate. Residues cysteine 206, serine 232, and serine 234 each coordinate a protein. Positions 231-236 (DSLSHQ) are autoinhibitory loop. Cysteine 275 and cysteine 280 form a disulfide bridge. A helical transmembrane segment spans residues 369 to 385 (GFILGLWALIIMVFFKT). Topologically, residues 386–395 (YGIKHMKFIF) are cytoplasmic.

It belongs to the peptidase C13 family. In terms of assembly, heteropentamer. Part of the GPI-anchor transamidase complex, consisting of PIGK, PIGT, PIGS, PIGU and GAA1. Interacts with GPAA1. Interacts with PIGT; this interaction, via a disulfide link, stabilizes the expression of GAA1 and PIGK and links them to PIGS. In terms of processing, the disulfide bond between PIGK/GPI8 and PIGT is important for normal enzyme activity.

The protein localises to the endoplasmic reticulum membrane. The protein operates within glycolipid biosynthesis; glycosylphosphatidylinositol-anchor biosynthesis. Its activity is regulated as follows. In the absence of proproteins substrates, exists in an inactive state with a disrupted catalytic site by an autoinhibitory loop. The binding of proprotein substrates, particularly the CSP region, to GPI-T triggers concerted conformational changes that alleviate the inhibition by the autoinhibitory loop. Meanwhile, proprotein residues near the omega- site induce the formation of a catalytic cleft for catalysis, following which the products are released and GPI-T reverts to the inactive state. Functionally, catalytic subunit of the glycosylphosphatidylinositol-anchor (GPI-anchor) transamidase (GPI-T) complex that catalyzes the formation of the linkage between a proprotein and a GPI-anchor and participates in GPI anchored protein biosynthesis. Recognizes diverse proproteins at a C-terminal signal peptide (CSP) region that lacks consensus sequence and replaces it with a GPI-anchor via a transamidation reaction. Transamidation catalysis reaction follows a two-phase mechanism. In the acyl-enzyme phase, the carbonyl group of the proproteins's omega-site undergoes a nucleophilic attack forming an enzyme-substrate thioester bond. Followed by a general acid catalysis that allows CSP releasing, regenerating the carbonyl, and forming the acyl-enzyme intermediate. In the GPI-anchor attachment phase, the amino group of the GPI-anchor's ethanolamine phosphate, the one on third mannose (EtNP3), mediates a nucleophilic attack on the carbonyl of the acyl-enzyme intermediate, replacing the CSP, allowing GPI-anchor attachment to the omega-residue, therefore forming the product and freeing the enzyme. The chain is GPI-anchor transamidase from Mus musculus (Mouse).